Here is a 336-residue protein sequence, read N- to C-terminus: Phospho-N-acetylmuramoyl-pentapeptide-transferase (336 aa).

Helical transmembrane passes span 3–23 (LTLIAAIISFMVSAFTMPYFI), 53–73 (GGTVFLLVATAVSLLVSLFSI), 78–98 (SLALISGILSIVVIYGIIGFL), 118–138 (LALQLAGGLMFYFLHVSPSGI), 143–163 (VFGYQLSLGIFYLFFVLFWVV), 174–194 (GIDGLASISVVISLVTYGVIA), 200–220 (FDVLLLIGTMIGALLGFFCFN), 226–246 (VFMGDVGSLALGAMLAAISIA), 254–274 (LIIGIVYVLETSSVMLQVFYF), and 316–336 (AFLWGVGSLASLLVLAILYVF).

Belongs to the glycosyltransferase 4 family. MraY subfamily. Mg(2+) serves as cofactor.

It localises to the cell membrane. The catalysed reaction is UDP-N-acetyl-alpha-D-muramoyl-L-alanyl-gamma-D-glutamyl-L-lysyl-D-alanyl-D-alanine + di-trans,octa-cis-undecaprenyl phosphate = Mur2Ac(oyl-L-Ala-gamma-D-Glu-L-Lys-D-Ala-D-Ala)-di-trans,octa-cis-undecaprenyl diphosphate + UMP. It functions in the pathway cell wall biogenesis; peptidoglycan biosynthesis. In terms of biological role, catalyzes the initial step of the lipid cycle reactions in the biosynthesis of the cell wall peptidoglycan: transfers peptidoglycan precursor phospho-MurNAc-pentapeptide from UDP-MurNAc-pentapeptide onto the lipid carrier undecaprenyl phosphate, yielding undecaprenyl-pyrophosphoryl-MurNAc-pentapeptide, known as lipid I. In Streptococcus pyogenes serotype M18 (strain MGAS8232), this protein is Phospho-N-acetylmuramoyl-pentapeptide-transferase.